The chain runs to 435 residues: Zinc finger CCCH domain-containing protein 16 (435 aa).

Residues M1–Q27 form a C3H1-type zinc finger. A 6 X 2 AA repeats of F-G region spans residues R2 to A88. Disordered stretches follow at residues P25–C105 and T205–N374. Tandem repeats lie at residues F34–G35 and F36–G37. The span at Q39–N51 shows a compositional bias: low complexity. A run of 2 repeats spans residues F56–G57 and F58–G59. Residues G63–R77 are compositionally biased toward polar residues. The segment covering T78–Q99 has biased composition (low complexity). 2 stretches are compositionally biased toward polar residues: residues T205–P320 and S328–K339. 2 consecutive repeat copies span residues F343 to G344 and F359 to G360. The segment covering T351–N374 has biased composition (polar residues).

Part of the nuclear pore complex (NPC). The NPC has an eight-fold symmetrical structure comprising a central transport channel and two rings, the cytoplasmic and nuclear rings, to which eight filaments are attached. The cytoplasmic filaments have loose ends, while the nuclear filaments are joined in a distal ring, forming a nuclear basket. NPCs are highly dynamic in configuration and composition, and can be devided in 3 subcomplexes, the NUP62 subcomplex, the NUP107-160 subcomplex and the NUP93 subcomplex, containing approximately 30 different nucleoporin proteins.

The protein localises to the nucleus envelope. It is found in the nucleus. The protein resides in the nuclear pore complex. The protein is Zinc finger CCCH domain-containing protein 16 of Arabidopsis thaliana (Mouse-ear cress).